Here is a 102-residue protein sequence, read N- to C-terminus: Small ribosomal subunit protein uS10 (102 aa).

The protein belongs to the universal ribosomal protein uS10 family. As to quaternary structure, part of the 30S ribosomal subunit.

Functionally, involved in the binding of tRNA to the ribosomes. This chain is Small ribosomal subunit protein uS10, found in Oenococcus oeni (strain ATCC BAA-331 / PSU-1).